We begin with the raw amino-acid sequence, 419 residues long: Nodulation protein NoeE (419 aa).

In terms of biological role, required for the formation of sulfated nod factor. Proposed to transfer activated sulfate (PAPS) to the fucose of the nod factor. The chain is Nodulation protein NoeE (noeE) from Sinorhizobium fredii (strain NBRC 101917 / NGR234).